The chain runs to 438 residues: Anthranilate synthase component 1 (438 aa).

L-tryptophan is bound by residues S45 and 220-222; that span reads PYL. 255 to 256 provides a ligand contact to chorismate; sequence GT. Residue E282 coordinates Mg(2+). Residues Y370, R389, 405–407, and G407 contribute to the chorismate site; that span reads GAG. Position 420 (E420) interacts with Mg(2+).

Belongs to the anthranilate synthase component I family. As to quaternary structure, heterotetramer consisting of two non-identical subunits: a beta subunit (TrpG) and a large alpha subunit (TrpE). Requires Mg(2+) as cofactor.

The enzyme catalyses chorismate + L-glutamine = anthranilate + pyruvate + L-glutamate + H(+). The protein operates within amino-acid biosynthesis; L-tryptophan biosynthesis; L-tryptophan from chorismate: step 1/5. Its activity is regulated as follows. Feedback inhibited by tryptophan. In terms of biological role, part of a heterotetrameric complex that catalyzes the two-step biosynthesis of anthranilate, an intermediate in the biosynthesis of L-tryptophan. In the first step, the glutamine-binding beta subunit (TrpG) of anthranilate synthase (AS) provides the glutamine amidotransferase activity which generates ammonia as a substrate that, along with chorismate, is used in the second step, catalyzed by the large alpha subunit of AS (TrpE) to produce anthranilate. In the absence of TrpG, TrpE can synthesize anthranilate directly from chorismate and high concentrations of ammonia. The polypeptide is Anthranilate synthase component 1 (trpE) (Aeropyrum pernix (strain ATCC 700893 / DSM 11879 / JCM 9820 / NBRC 100138 / K1)).